We begin with the raw amino-acid sequence, 102 residues long: Large ribosomal subunit protein bL21 (102 aa).

This sequence belongs to the bacterial ribosomal protein bL21 family. As to quaternary structure, part of the 50S ribosomal subunit. Contacts protein L20.

This protein binds to 23S rRNA in the presence of protein L20. In Bacillus licheniformis (strain ATCC 14580 / DSM 13 / JCM 2505 / CCUG 7422 / NBRC 12200 / NCIMB 9375 / NCTC 10341 / NRRL NRS-1264 / Gibson 46), this protein is Large ribosomal subunit protein bL21.